A 732-amino-acid chain; its full sequence is Elongation factor 2 (732 aa).

Residues 19-260 (ERIRNIDIAA…MVIKNLPNPR (242 aa)) enclose the tr-type G domain. GTP contacts are provided by residues 28–35 (AHIDHGKT), 94–98 (DTPGH), and 148–151 (NKVD). His-598 is subject to Diphthamide.

This sequence belongs to the TRAFAC class translation factor GTPase superfamily. Classic translation factor GTPase family. EF-G/EF-2 subfamily.

It is found in the cytoplasm. Functionally, catalyzes the GTP-dependent ribosomal translocation step during translation elongation. During this step, the ribosome changes from the pre-translocational (PRE) to the post-translocational (POST) state as the newly formed A-site-bound peptidyl-tRNA and P-site-bound deacylated tRNA move to the P and E sites, respectively. Catalyzes the coordinated movement of the two tRNA molecules, the mRNA and conformational changes in the ribosome. In Picrophilus torridus (strain ATCC 700027 / DSM 9790 / JCM 10055 / NBRC 100828 / KAW 2/3), this protein is Elongation factor 2.